Consider the following 288-residue polypeptide: Phosphatidylserine decarboxylase proenzyme (288 aa).

Residues Asp101, His158, and Ser262 each act as charge relay system; for autoendoproteolytic cleavage activity in the active site. The active-site Schiff-base intermediate with substrate; via pyruvic acid; for decarboxylase activity is the Ser262. Ser262 is modified (pyruvic acid (Ser); by autocatalysis).

This sequence belongs to the phosphatidylserine decarboxylase family. PSD-B subfamily. Prokaryotic type I sub-subfamily. As to quaternary structure, heterodimer of a large membrane-associated beta subunit and a small pyruvoyl-containing alpha subunit. The cofactor is pyruvate. Post-translationally, is synthesized initially as an inactive proenzyme. Formation of the active enzyme involves a self-maturation process in which the active site pyruvoyl group is generated from an internal serine residue via an autocatalytic post-translational modification. Two non-identical subunits are generated from the proenzyme in this reaction, and the pyruvate is formed at the N-terminus of the alpha chain, which is derived from the carboxyl end of the proenzyme. The autoendoproteolytic cleavage occurs by a canonical serine protease mechanism, in which the side chain hydroxyl group of the serine supplies its oxygen atom to form the C-terminus of the beta chain, while the remainder of the serine residue undergoes an oxidative deamination to produce ammonia and the pyruvoyl prosthetic group on the alpha chain. During this reaction, the Ser that is part of the protease active site of the proenzyme becomes the pyruvoyl prosthetic group, which constitutes an essential element of the active site of the mature decarboxylase.

The protein localises to the cell membrane. The enzyme catalyses a 1,2-diacyl-sn-glycero-3-phospho-L-serine + H(+) = a 1,2-diacyl-sn-glycero-3-phosphoethanolamine + CO2. The protein operates within phospholipid metabolism; phosphatidylethanolamine biosynthesis; phosphatidylethanolamine from CDP-diacylglycerol: step 2/2. Functionally, catalyzes the formation of phosphatidylethanolamine (PtdEtn) from phosphatidylserine (PtdSer). The polypeptide is Phosphatidylserine decarboxylase proenzyme (Alkalilimnicola ehrlichii (strain ATCC BAA-1101 / DSM 17681 / MLHE-1)).